Reading from the N-terminus, the 363-residue chain is Aminomethyltransferase (363 aa).

Belongs to the GcvT family. As to quaternary structure, the glycine cleavage system is composed of four proteins: P, T, L and H.

It carries out the reaction N(6)-[(R)-S(8)-aminomethyldihydrolipoyl]-L-lysyl-[protein] + (6S)-5,6,7,8-tetrahydrofolate = N(6)-[(R)-dihydrolipoyl]-L-lysyl-[protein] + (6R)-5,10-methylene-5,6,7,8-tetrahydrofolate + NH4(+). In terms of biological role, the glycine cleavage system catalyzes the degradation of glycine. The chain is Aminomethyltransferase from Staphylococcus aureus (strain MRSA252).